Reading from the N-terminus, the 231-residue chain is MAKLTKRQKAIAGKIEAGKAYNFVEAAALLTELSTVKFSESVDVAVNLGVDPRKSDQVVRSATVLPHGTGKTVRVAVFTQGPAAEAALAAGADRVGMDDLAAEMKGGDLNYDVVIASPDAMRVVGQLGQVLGPRGLMPNPKVGTVTPDVASAVKNAKAGQVRYRTDKNGIIHTSVGKVGFDAVKLKENVEALIADLKRIKPASSKGIYVKRVTLSTTMGPGLVIDQGSLDV.

The protein belongs to the universal ribosomal protein uL1 family. Part of the 50S ribosomal subunit.

Its function is as follows. Binds directly to 23S rRNA. The L1 stalk is quite mobile in the ribosome, and is involved in E site tRNA release. Protein L1 is also a translational repressor protein, it controls the translation of the L11 operon by binding to its mRNA. This Pseudomonas fluorescens (strain ATCC BAA-477 / NRRL B-23932 / Pf-5) protein is Large ribosomal subunit protein uL1.